Here is a 339-residue protein sequence, read N- to C-terminus: Fructose-1,6-bisphosphatase isozyme 2 (339 aa).

The important for interaction with ALDOA stretch occupies residues 3-10 (DRSPFETD). Residues Val-18 and 28-32 (TGELT) each bind AMP. Asp-69 and Glu-98 together coordinate Mg(2+). AMP is bound at residue 113–114 (KY). The Mg(2+) site is built by Asp-119, Leu-121, and Asp-122. Asp-122 lines the substrate pocket. Arg-141 contacts AMP. The Nuclear localization signal signature appears at 204 to 208 (KKKGK). 213–216 (NEGY) is a substrate binding site. Phosphotyrosine is present on residues Tyr-216 and Tyr-219. Residues 245 to 249 (YVGSM), Tyr-265, and Lys-275 each bind substrate. Glu-281 provides a ligand contact to Mg(2+).

This sequence belongs to the FBPase class 1 family. As to quaternary structure, homotetramer. Interacts with ALDOA; the interaction blocks inhibition by physiological concentrations of AMP and reduces inhibition by Ca(2+). Interacts with alpha-actinin and F-actin. Mg(2+) is required as a cofactor.

Its subcellular location is the cell junction. The protein resides in the cytoplasm. The protein localises to the nucleus. It localises to the myofibril. It is found in the sarcomere. Its subcellular location is the z line. The enzyme catalyses beta-D-fructose 1,6-bisphosphate + H2O = beta-D-fructose 6-phosphate + phosphate. Its pathway is carbohydrate biosynthesis; gluconeogenesis. Its activity is regulated as follows. Subject to complex allosteric regulation. The enzyme can assume an active R-state, or an inactive T-state. Intermediate conformations may exist. AMP acts as an allosteric inhibitor. Fructose 2,6-bisphosphate acts as a competitive inhibitor. Strongly inhibited by Ca(2+). Its function is as follows. Catalyzes the hydrolysis of fructose 1,6-bisphosphate to fructose 6-phosphate in the presence of divalent cations and probably participates in glycogen synthesis from carbohydrate precursors, such as lactate. In Bos taurus (Bovine), this protein is Fructose-1,6-bisphosphatase isozyme 2 (FBP2).